The primary structure comprises 37 residues: Large ribosomal subunit protein bL36A (37 aa).

Belongs to the bacterial ribosomal protein bL36 family.

This chain is Large ribosomal subunit protein bL36A, found in Actinobacillus pleuropneumoniae serotype 3 (strain JL03).